The chain runs to 152 residues: Heavy metal-associated isoprenylated plant protein 22 (152 aa).

Positions 28 to 91 (MQTVNIKVKI…TVQSTGKKKA (64 aa)) constitute an HMA domain. Residues Cys-39 and Cys-42 each coordinate a metal cation. A disordered region spans residues 123 to 152 (SEQAQAQPGSTDDKLMSLFSDENPNACTVM). The segment covering 142–152 (SDENPNACTVM) has biased composition (polar residues). Cys-149 carries the cysteine methyl ester modification. Cys-149 carries the S-farnesyl cysteine lipid modification. The propeptide at 150–152 (TVM) is removed in mature form.

This sequence belongs to the HIPP family. As to quaternary structure, interacts with ZHD11/HB29. As to expression, expressed in lateral roots and mature anthers.

Its subcellular location is the membrane. Its function is as follows. Heavy-metal-binding protein. Binds cadmium. May be involved in cadmium transport and play a role in cadmium detoxification. This Arabidopsis thaliana (Mouse-ear cress) protein is Heavy metal-associated isoprenylated plant protein 22.